Reading from the N-terminus, the 549-residue chain is Adhesion G protein-coupled receptor G3 (549 aa).

Positions 1–20 (MATPRGLGALLLLLLLPTSG) are cleaved as a signal peptide. Over 21 to 270 (QEKPTEGPRN…DQSTVHILTR (250 aa)) the chain is Extracellular. N-linked (GlcNAc...) asparagine glycosylation is found at Asn98, Asn144, and Asn210. One can recognise a GAIN-B domain in the interval 107 to 262 (FYFSLEPSQV…ALLLRPTLDQ (156 aa)). Intrachain disulfides connect Cys215/Cys244 and Cys233/Cys246. The interval 215 to 262 (CVFWDVTKGTTGDWSSEGCSTEVRPEGTVCCCDHLTFFALLLRPTLDQ) is GPS. The interval 251–259 (FFALLLRPT) is stachel. Residues 271–295 (ISQAGCGVSMIFLAFTIILYAFLRL) traverse the membrane as a helical segment. Topologically, residues 296-304 (SRERFKSED) are cytoplasmic. A helical membrane pass occupies residues 305–326 (APKIHVALGGSLFLLNLAFLVN). Topologically, residues 327 to 338 (VGSGSKGSDAAC) are extracellular. A disulfide bridge links Cys338 with Cys420. The chain crosses the membrane as a helical span at residues 339-364 (WARGAVFHYFLLCAFTWMGLEAFHLY). The Cytoplasmic portion of the chain corresponds to 365-378 (LLAVRVFNTYFGHY). The helical transmembrane segment at 379 to 400 (FLKLSLVGWGLPALMVIGTGSA) threads the bilayer. Topologically, residues 401–428 (NSYGLYTIRDRENRTSLELCWFREGTTM) are extracellular. Asn413 carries N-linked (GlcNAc...) asparagine glycosylation. A helical transmembrane segment spans residues 429-454 (YALYITVHGYFLITFLFGMVVLALVV). The Cytoplasmic segment spans residues 455-474 (WKIFTLSRATAVKERGKNRK). The chain crosses the membrane as a helical span at residues 475–495 (KVLTLLGLSSLVGVTWGLAIF). The Extracellular portion of the chain corresponds to 496 to 501 (TPLGLS). Residues 502-525 (TVYIFALFNSLQGVFICCWFTILY) form a helical membrane-spanning segment. Asn510 serves as a coordination point for cortisol. Residues 526-549 (LPSQSTTVSSSTARLDQAHSASQE) are Cytoplasmic-facing.

It belongs to the G-protein coupled receptor 2 family. Adhesion G-protein coupled receptor (ADGR) subfamily. Heterodimer of 2 chains generated by proteolytic processing; the large extracellular N-terminal fragment and the membrane-bound C-terminal fragment predominantly remain associated and non-covalently linked. Interacts with PRTN3; this interaction induces the activation of PAR2. Interacts with GNAO1 (when palmitoylated). Autoproteolytically processed at the GPS region of the GAIN-B domain; this cleavage modulates receptor activity. Post-translationally, O- and N-glycosylated. Expressed in cultured primary dermal lymphatic endothelial cells. Highly expressed in polymorphonuclear cells (PMNs) including neutrophilic, eosinophilic, and basophilic granulocytes.

It is found in the cell membrane. Forms a heterodimer of 2 chains generated by proteolytic processing that remain associated through non-covalent interactions mediated by the GAIN-B domain. In the inactivated receptor, the Stachel sequence (also named stalk) is embedded in the GAIN-B domain, where it adopts a beta-strand conformation. On activation, the Stachel moves into the 7 transmembrane region and adopts a twisted hook-shaped configuration that forms contacts within the receptor, leading to coupling of a G-alpha protein, which activates signaling. The cleaved GAIN-B and N-terminal domains can then dissociate from the rest of the receptor. Functionally, adhesion G-protein coupled receptor (aGPCR) for glucocorticoid hormones such as cortisol, cortisone and 11-deoxycortisol. Ligand binding causes a conformation change that triggers signaling via guanine nucleotide-binding proteins (G proteins) and modulates the activity of downstream effectors, such as adenylate cyclase. ADGRG3/GPR97 is coupled to G(o)/GNAO1 G proteins and mediates signaling by inhibiting adenylate cyclase activity. May also signal through G-alpha(q)-proteins; additional evidence are however required to confirm this result in vivo. Plays a role in the regulation of various processes including B-cell development, inflammation or innate immunity. Regulates migration of lymphatic endothelial cells in vitro via the small GTPases RhoA and CDC42. Antibody ligation leads to the production and activation of antimicrobial mediators like reactive oxygen species (ROS) and myeloperoxidase (MPO) as well as enhanced bacteria uptake and killing by granulocytes. Additionally, collaborates with protease-activated receptor 2/PAR2 to stimulate neutrophil-driven antimicrobial responses and endothelial cell activation. The protein is Adhesion G protein-coupled receptor G3 of Homo sapiens (Human).